Here is a 175-residue protein sequence, read N- to C-terminus: Protein UPS1, mitochondrial (175 aa).

Positions 1–80 (MVLLHKSTHI…RGITETWIIE (80 aa)) are required for mitochondrial targeting. Residues 2–172 (VLLHKSTHIF…VIQKLEEARN (171 aa)) enclose the PRELI/MSF1 domain. Tyr-26, Lys-58, Lys-148, and Asn-152 together coordinate a 1,2-diacyl-sn-glycero-3-phosphate.

It belongs to the slowmo family. In terms of assembly, interacts with MDM35. Found associated with a 170 kDa complex.

Its subcellular location is the mitochondrion inner membrane. It localises to the mitochondrion intermembrane space. Required for maintenance of normal mitochondrial morphology. Required for PCP1-dependent processing of MGM1. The UPS1:MDM35 complex mediates the transfer of phosphatidic acid (PA) between liposomes and probably functions as a PA transporter across the mitochondrion intermembrane space. Phosphatidic acid release requires dissociation of the UPS1:MDM35 complex. Phosphatidic acid import is required for cardiolipin (CL) synthesis in the mitochondrial inner membrane. With UPS2, controls the level of cardiolipin in mitochondria. Cardiolipin is a unique phospholipid with four fatty acid chains and is present mainly in the mitochondrial inner membrane where it stabilizes the electron transport chain supercomplex between complexes III and IV through direct interaction of their subunits. The sequence is that of Protein UPS1, mitochondrial (UPS1) from Saccharomyces cerevisiae (strain ATCC 204508 / S288c) (Baker's yeast).